Reading from the N-terminus, the 599-residue chain is Pentatricopeptide repeat-containing protein At3g62540, mitochondrial (599 aa).

Residues 1–99 (MAAAPWLYLS…RGFSSGSSNV (99 aa)) constitute a mitochondrion transit peptide. PPR repeat units follow at residues 194–228 (ASRT…GLLT), 230–262 (ETFT…KFKI), 263–293 (GVET…LKER), 297–331 (NMMT…GLKP), 332–366 (DIVA…GPCP), 367–401 (NVRS…GLQP), 402–436 (DAAV…GHPP), 437–471 (DGKT…EIEP), 472–506 (SIHT…GICP), and 507–541 (DDNS…GMKT).

This sequence belongs to the PPR family. P subfamily.

The protein localises to the mitochondrion. The polypeptide is Pentatricopeptide repeat-containing protein At3g62540, mitochondrial (Arabidopsis thaliana (Mouse-ear cress)).